The primary structure comprises 258 residues: MALIRVLANLLILQLSYAQKSSELVVGGDECNINEHRSLVVLFNSSGLICSGTLINQEWVLTAAHCDSKNFQMLFGVHSKKILNEDEQTRDPKEKFICPNKKKDDEKDKDIMLIRLDSPVSNSEHIAPLSLPSSSPTVDSVCRIMGWGTIKPADETYPDVPHCANINILDHTVCRAAYPVLLAGSSTLCAGTQQGGKDTCVGDSGGPLICNGQIQGIVSWGAHPCGQGSKPGVYTKVFDHLDWIKSIIAGNTAVTCPP.

Residues 1–18 form the signal peptide; it reads MALIRVLANLLILQLSYA. Positions 19-24 are excised as a propeptide; the sequence is QKSSEL. The region spanning 25-249 is the Peptidase S1 domain; that stretch reads VVGGDECNIN…HLDWIKSIIA (225 aa). Disulfide bonds link cysteine 31-cysteine 163, cysteine 50-cysteine 66, cysteine 98-cysteine 256, cysteine 142-cysteine 210, cysteine 174-cysteine 189, and cysteine 200-cysteine 225. N-linked (GlcNAc...) asparagine glycosylation is present at asparagine 44. Residues histidine 65 and aspartate 110 each act as charge relay system in the active site. Serine 204 serves as the catalytic Charge relay system.

It belongs to the peptidase S1 family. Snake venom subfamily. In terms of assembly, monomer. In terms of processing, glycosylated. In terms of tissue distribution, expressed by the venom gland.

The protein resides in the secreted. Functionally, snake venom serine protease that activates plasminogen. Displays indirect fibrino(geno)lytic activity through conversion of plasminogen to plasmin. Shows a preferential cleavage at Arg-|-Xaa instead of Lys-|-Xaa bonds. In Gloydius brevicauda (Korean slamosa snake), this protein is Venom plasminogen activator Haly-PA.